A 388-amino-acid polypeptide reads, in one-letter code: Beta-hexosaminidase LpqI (388 aa).

The first 19 residues, 1–19 (MAFPRTLAILAAAAALVVA), serve as a signal peptide directing secretion. A lipid anchor (N-palmitoyl cysteine) is attached at cysteine 20. The S-diacylglycerol cysteine moiety is linked to residue cysteine 20. Substrate-binding positions include aspartate 123, arginine 131, arginine 193, and 223–224 (KH). Histidine 236 (proton donor/acceptor) is an active-site residue. The Nucleophile role is filled by aspartate 311.

The protein belongs to the glycosyl hydrolase 3 family.

The protein resides in the cell inner membrane. It carries out the reaction Hydrolysis of terminal non-reducing N-acetyl-D-hexosamine residues in N-acetyl-beta-D-hexosaminides.. It participates in cell wall biogenesis; peptidoglycan recycling. Plays a role in peptidoglycan recycling by cleaving the terminal beta-1,4-linked N-acetylglucosamine (GlcNAc) from peptidoglycan fragments. Acts as a regulator for GlcNAc-MurNAc levels by cleaving disaccharides and allowing the breakdown of MurNAc. The polypeptide is Beta-hexosaminidase LpqI (Mycobacterium bovis (strain BCG / Pasteur 1173P2)).